The chain runs to 182 residues: Ribosome-recycling factor (182 aa).

This sequence belongs to the RRF family.

The protein resides in the cytoplasm. Functionally, responsible for the release of ribosomes from messenger RNA at the termination of protein biosynthesis. May increase the efficiency of translation by recycling ribosomes from one round of translation to another. The chain is Ribosome-recycling factor from Prochlorococcus marinus (strain MIT 9312).